A 338-amino-acid chain; its full sequence is tRNA N6-adenosine threonylcarbamoyltransferase (338 aa).

The Fe cation site is built by histidine 111 and histidine 115. Substrate is bound by residues 134-138 (LVSGG), aspartate 167, glycine 180, and asparagine 272. Position 300 (aspartate 300) interacts with Fe cation.

This sequence belongs to the KAE1 / TsaD family. It depends on Fe(2+) as a cofactor.

The protein resides in the cytoplasm. It catalyses the reaction L-threonylcarbamoyladenylate + adenosine(37) in tRNA = N(6)-L-threonylcarbamoyladenosine(37) in tRNA + AMP + H(+). In terms of biological role, required for the formation of a threonylcarbamoyl group on adenosine at position 37 (t(6)A37) in tRNAs that read codons beginning with adenine. Is involved in the transfer of the threonylcarbamoyl moiety of threonylcarbamoyl-AMP (TC-AMP) to the N6 group of A37, together with TsaE and TsaB. TsaD likely plays a direct catalytic role in this reaction. This Shewanella denitrificans (strain OS217 / ATCC BAA-1090 / DSM 15013) protein is tRNA N6-adenosine threonylcarbamoyltransferase.